A 358-amino-acid chain; its full sequence is Small ribosomal subunit biogenesis GTPase RsgA 2 (358 aa).

Residues 106 to 261 (AEQLIAANVD…LIDTPGMREI (156 aa)) form the CP-type G domain. GTP contacts are provided by residues 151 to 154 (SKAD) and 203 to 211 (GSSGVGKST). Zn(2+) contacts are provided by C284, C289, H291, and C297.

The protein belongs to the TRAFAC class YlqF/YawG GTPase family. RsgA subfamily. In terms of assembly, monomer. Associates with 30S ribosomal subunit, binds 16S rRNA. Requires Zn(2+) as cofactor.

The protein localises to the cytoplasm. In terms of biological role, one of several proteins that assist in the late maturation steps of the functional core of the 30S ribosomal subunit. Helps release RbfA from mature subunits. May play a role in the assembly of ribosomal proteins into the subunit. Circularly permuted GTPase that catalyzes slow GTP hydrolysis, GTPase activity is stimulated by the 30S ribosomal subunit. This is Small ribosomal subunit biogenesis GTPase RsgA 2 from Vibrio parahaemolyticus serotype O3:K6 (strain RIMD 2210633).